We begin with the raw amino-acid sequence, 276 residues long: Dermonecrotic toxin LdSicTox-alphaIB2 (276 aa).

Residue histidine 5 is part of the active site. Mg(2+)-binding residues include glutamate 25 and aspartate 27. The active-site Nucleophile is histidine 41. Intrachain disulfides connect cysteine 45-cysteine 51 and cysteine 47-cysteine 190. Aspartate 85 contributes to the Mg(2+) binding site. Asparagine 253 carries N-linked (GlcNAc...) asparagine glycosylation.

It belongs to the arthropod phospholipase D family. Class II subfamily. Mg(2+) is required as a cofactor. Expressed by the venom gland.

The protein resides in the secreted. The catalysed reaction is an N-(acyl)-sphingosylphosphocholine = an N-(acyl)-sphingosyl-1,3-cyclic phosphate + choline. It carries out the reaction an N-(acyl)-sphingosylphosphoethanolamine = an N-(acyl)-sphingosyl-1,3-cyclic phosphate + ethanolamine. The enzyme catalyses a 1-acyl-sn-glycero-3-phosphocholine = a 1-acyl-sn-glycero-2,3-cyclic phosphate + choline. It catalyses the reaction a 1-acyl-sn-glycero-3-phosphoethanolamine = a 1-acyl-sn-glycero-2,3-cyclic phosphate + ethanolamine. In terms of biological role, dermonecrotic toxins cleave the phosphodiester linkage between the phosphate and headgroup of certain phospholipids (sphingolipid and lysolipid substrates), forming an alcohol (often choline) and a cyclic phosphate. This toxin acts on sphingomyelin (SM). It may also act on ceramide phosphoethanolamine (CPE), lysophosphatidylcholine (LPC) and lysophosphatidylethanolamine (LPE), but not on lysophosphatidylserine (LPS), and lysophosphatidylglycerol (LPG). It acts by transphosphatidylation, releasing exclusively cyclic phosphate products as second products. Induces dermonecrosis, hemolysis, increased vascular permeability, edema, inflammatory response, and platelet aggregation. The polypeptide is Dermonecrotic toxin LdSicTox-alphaIB2 (Loxosceles deserta (Desert recluse spider)).